A 609-amino-acid chain; its full sequence is Zinc metalloproteinase-disintegrin-like VAP2B (609 aa).

A signal peptide spans 1–20 (MIQVLLVTICLAAFPYQGSS). A propeptide spanning residues 21–189 (IILESGNVND…KKASQLVVTA (169 aa)) is cleaved from the precursor. E190 is modified (pyrrolidone carboxylic acid (Glu)). In terms of domain architecture, Peptidase M12B spans 198–393 (RFVELFLVVD…HNPECILNEP (196 aa)). The Ca(2+) site is built by E201 and D285. 3 cysteine pairs are disulfide-bonded: C308/C388, C348/C372, and C350/C355. H333 contacts Zn(2+). The active site involves E334. The Zn(2+) site is built by H337 and H343. N371 carries an N-linked (GlcNAc...) asparagine glycan. 8 residues coordinate Ca(2+): C388, N391, V403, N406, L408, E410, E413, and D416. In terms of domain architecture, Disintegrin spans 401–487 (PPVCGNELLE…ECPADVFHKN (87 aa)). Cystine bridges form between C404–C423, C404–C433, C415–C428, C415–C433, C417–C423, C427–C450, C441–C447, C446–C472, C459–C479, C466–C491, C466–C498, C491–C503, C498–C503, C510–C525, C510–C560, C525–C571, C538–C548, C548–C555, C555–C597, C560–C571, C591–C602, and C597–C602. The interval 459 to 472 (CRASMSECDPAEHC) is inhibits platelet aggregation. Positions 465–467 (ECD) match the D/ECD-tripeptide motif. Residues D467, P468, E470, D482, and V483 each contribute to the Ca(2+) site.

This sequence belongs to the venom metalloproteinase (M12B) family. P-III subfamily. P-IIIb sub-subfamily. As to quaternary structure, monomer or heterodimer; non-covalently linked. Interacts with fibrillar collagen. It depends on Zn(2+) as a cofactor. The N-terminus is blocked. As to expression, expressed by the venom gland.

It localises to the secreted. Zinc metalloprotease that abolishes platelet aggregation induced by collagen, but has no effect on platelet aggregation induced by ADP or thromboxane analog. This inhibition may be due to its ability to bind collagen and block the binding site on collagen for platelets and/or to its ability to bind to the platelet alpha-2/beta-1 collagen receptor (ITGA2/ITGB1) to block its interaction with collagen and hence prevent platelet stimulation. Functionally, abolishes platelet aggregation induced by collagen (IC(50)=66 nM) but not ADP-stimulated platelet aggregation. This inhibition may be due to its ability to bind collagen and block the binding site on collagen for platelets and/or to its ability to bind to the platelet alpha-2/beta-1 collagen receptor (ITGA2/ITGB1) to block its interaction with collagen and hence prevent platelet stimulation. The chain is Zinc metalloproteinase-disintegrin-like VAP2B from Crotalus atrox (Western diamondback rattlesnake).